A 208-amino-acid polypeptide reads, in one-letter code: Small ribosomal subunit protein uS4 (208 aa).

The S4 RNA-binding domain maps to 97 to 160 (SRLDNIVFRL…KKNDKIAEAL (64 aa)).

It belongs to the universal ribosomal protein uS4 family. In terms of assembly, part of the 30S ribosomal subunit. Contacts protein S5. The interaction surface between S4 and S5 is involved in control of translational fidelity.

Functionally, one of the primary rRNA binding proteins, it binds directly to 16S rRNA where it nucleates assembly of the body of the 30S subunit. With S5 and S12 plays an important role in translational accuracy. The polypeptide is Small ribosomal subunit protein uS4 (Mesoplasma florum (strain ATCC 33453 / NBRC 100688 / NCTC 11704 / L1) (Acholeplasma florum)).